We begin with the raw amino-acid sequence, 1807 residues long: Vitellogenin-A2 (1807 aa).

Positions M1 to S15 are cleaved as a signal peptide. A Vitellogenin domain is found at F24–I664. The segment at T953 to A974 is disordered. N-linked (GlcNAc...) asparagine glycosylation is present at N1094. The disordered stretch occupies residues E1095–E1320. A compositionally biased stretch (basic residues) spans S1101–N1111. The segment covering R1112–K1123 has biased composition (basic and acidic residues). Residues S1126–S1163 are compositionally biased toward low complexity. The span at Q1187–K1198 shows a compositional bias: basic and acidic residues. Positions S1205–S1232 are enriched in low complexity. The segment covering E1233–Q1247 has biased composition (basic and acidic residues). Composition is skewed to low complexity over residues S1263–E1276 and S1309–E1320. Residues G1536–S1714 form the VWFD domain. Intrachain disulfides connect C1538–C1677 and C1561–C1713.

Produced by the liver, secreted into the blood and then sequestered by receptor mediated endocytosis into growing oocytes, where it is generally cleaved, giving rise to the respective yolk components.

Functionally, precursor of the major egg-yolk proteins that are sources of nutrients during early development of oviparous organisms. This chain is Vitellogenin-A2, found in Xenopus laevis (African clawed frog).